The primary structure comprises 238 residues: MNEMKFLQHLKEKGFELTDEQQKQFAIYYETLVEWNEKINLTAVTEKEEVYLKHFFDSITPSFYFDFNKVKSICDVGAGAGFPSIPLKILYPHLEITIVDSLNKRINFLNHLSAELNLTNCHFVHDRAETFGKGEYRESFDVVTARAVARLSVLSELCLPLVKKGGHFIALKGAQGEIEVEEGLFAISILGGAVVENHPLTLPEEESMRYILDIEKKRQTPKKYPRKPGTPNKEPLLK.

Residues G77, F82, 128–129 (AE), and R146 contribute to the S-adenosyl-L-methionine site. The disordered stretch occupies residues 216-238 (KKRQTPKKYPRKPGTPNKEPLLK).

It belongs to the methyltransferase superfamily. RNA methyltransferase RsmG family.

The protein localises to the cytoplasm. Its function is as follows. Specifically methylates the N7 position of guanine in position 535 of 16S rRNA. The sequence is that of Ribosomal RNA small subunit methyltransferase G from Macrococcus caseolyticus (strain JCSC5402) (Macrococcoides caseolyticum).